Here is a 455-residue protein sequence, read N- to C-terminus: MTKDFKISVSAALISALFSSPYAFADDYDGIPNLTAVQISPNADPALGLEYPVRPPVPGAGGLNASAKGIHSIAIGATAEAAKGAAVAVGAGSIATGVNSVAIGPLSKALGDSAVTYGAASTAQKDGVAIGARASTSDTGVAVGFNSKADAKNSVAIGHSSHVAANHGYSIAIGDRSKTDRENSVSIGHESLNRQLTHLAAGTKDTDAVNVAQLKKEIEKTQENTNKRSAELLANANAYADNKSSSVLGIANNYTDSKSAETLENARKEAFAQSKDVLNMAKAHSNSVARTTLETAEEHANSVARTTLETAEEHANKKSAEALASANVYADSKSSHTLKTANSYTDVTVSNSTKKAIRESNQYTDHKFRQLDNRLDKLDTRVDKGLASSAALNSLFQPYGVGKVNFTAGVGGYRSSQALAIGSGYRVNENVALKAGVAYAGSSDVMYNASFNIEW.

An N-terminal signal peptide occupies residues 1-25 (MTKDFKISVSAALISALFSSPYAFA). A surface exposed passenger domain region spans residues 26 to 363 (DDYDGIPNLT…KKAIRESNQY (338 aa)). A coiled-coil region spans residues 209-243 (VNVAQLKKEIEKTQENTNKRSAELLANANAYADNK). Residues 364 to 402 (TDHKFRQLDNRLDKLDTRVDKGLASSAALNSLFQPYGVG) form an outer membrane translocation of the passenger domain region. 4 beta stranded membrane-spanning segments follow: residues 402 to 412 (GKVNFTAGVGG), 416 to 427 (SQALAIGSGYRV), 434 to 440 (KAGVAYA), and 444 to 455 (DVMYNASFNIEW). Positions 403 to 455 (KVNFTAGVGGYRSSQALAIGSGYRVNENVALKAGVAYAGSSDVMYNASFNIEW) are translocator domain.

The protein belongs to the autotransporter-2 (AT-2) (TC 1.B.40) family. Homotrimer; in gels migrates as monomers, dimers and homotrimers. Does not form trimers with distantly related EibA from E.coli; coexpression was lethal and one of the genes is eliminated in vivo. If the full translocator domain (368-455) is exchanged with that of EibA ('299-392'), will form heterotrimers with EibA and vice-versa.

It localises to the cell surface. It is found in the cell outer membrane. Functionally, collagen-binding outer membrane protein forming a fibrillar matrix on the bacterial cell surface. Promotes initial attachment and invasion of eukaryotic cells. Also protects the bacteria by being responsible for agglutination, serum resistance, complement inactivation and phagocytosis resistance. The sequence is that of Adhesin YadA (yadA) from Yersinia enterocolitica.